The primary structure comprises 82 residues: Diphthamide biosynthesis protein 3 (82 aa).

The DPH-type MB domain occupies 4–60; the sequence is FHDEVEIEDFQYDEDSETYFYPCPCGDNFAITKEDLENGEDVATCPSCSLIIKVIYD. Fe cation-binding residues include C26, C28, C48, and C51.

Belongs to the DPH3 family. As to quaternary structure, component of the 2-(3-amino-3-carboxypropyl)histidine synthase complex composed of DPH1, DPH2, DPH3 and a NADH-dependent reductase. Interacts with SERGEF. Fe(2+) is required as a cofactor. Widely expressed with highest levels in heart, liver, kidney and testis.

It localises to the cytoplasm. The protein resides in the nucleus. It catalyses the reaction [3Fe-4S](1+)-[protein] + Fe(2+)-[Dph3] = [3Fe-4S](0)-[protein] + Fe(3+)-[Dph3]. The catalysed reaction is 2 [3Fe-4S](0)-[protein] + 2 Fe(2+)-[Dph3] + NADH = 2 [4Fe-4S](1+)-[protein] + 2 [Dph3] + NAD(+) + H(+). The protein operates within protein modification; peptidyl-diphthamide biosynthesis. In terms of biological role, required for the first step of diphthamide biosynthesis, a post-translational modification of histidine which occurs in elongation factor 2. DPH1 and DPH2 transfer a 3-amino-3-carboxypropyl (ACP) group from S-adenosyl-L-methionine (SAM) to a histidine residue, the reaction is assisted by a reduction system comprising DPH3 and a NADH-dependent reductase. Acts as an electron donor to reduce the Fe-S cluster in DPH1-DPH2 keeping the [4Fe-4S] clusters in the active and reduced state. Restores iron to DPH1-DPH2 iron-sulfur clusters which have degraded from [4Fe-4S] to [3Fe-4S] by donating an iron atom to reform [4Fe-4S] clusters, in a manner dependent on the presence of elongation factor 2 and SAM. Associates with the elongator complex and is required for tRNA Wobble base modifications mediated by the elongator complex. The elongator complex is required for multiple tRNA modifications, including mcm5U (5-methoxycarbonylmethyl uridine), mcm5s 2U (5-methoxycarbonylmethyl-2-thiouridine), and ncm5U (5-carbamoylmethyl uridine). The protein is Diphthamide biosynthesis protein 3 of Mus musculus (Mouse).